We begin with the raw amino-acid sequence, 73 residues long: Ocellatin-PT6 (73 aa).

The N-terminal stretch at 1–22 is a signal peptide; sequence MAFLKKSLFLVLFLGLVSLSIC. The propeptide occupies 23 to 39; it reads DEEKRQDEDDDDDDDEE.

In terms of tissue distribution, expressed by the skin glands.

It localises to the secreted. In terms of biological role, has antibacterial activity against Gram-negative bacterium E.coli ATCC 25922 (MIC=120 uM) but not against S.pneumoniae ATCC 700603, S.choleraesuis ATCC 14028 or against Gram-positive bacterium S.aureus ATCC 29313. Shows no hemolytic activity and no cytotoxicity. This chain is Ocellatin-PT6, found in Leptodactylus pustulatus (Ceara white-lipped frog).